The primary structure comprises 426 residues: Serine--tRNA ligase (426 aa).

230–232 is a binding site for L-serine; sequence TSE. 261 to 263 is a binding site for ATP; the sequence is RKE. E284 serves as a coordination point for L-serine. ATP is bound at residue 348 to 351; that stretch reads EISS. S385 contributes to the L-serine binding site.

Belongs to the class-II aminoacyl-tRNA synthetase family. Type-1 seryl-tRNA synthetase subfamily. As to quaternary structure, homodimer. The tRNA molecule binds across the dimer.

It localises to the cytoplasm. The enzyme catalyses tRNA(Ser) + L-serine + ATP = L-seryl-tRNA(Ser) + AMP + diphosphate + H(+). It catalyses the reaction tRNA(Sec) + L-serine + ATP = L-seryl-tRNA(Sec) + AMP + diphosphate + H(+). Its pathway is aminoacyl-tRNA biosynthesis; selenocysteinyl-tRNA(Sec) biosynthesis; L-seryl-tRNA(Sec) from L-serine and tRNA(Sec): step 1/1. Its function is as follows. Catalyzes the attachment of serine to tRNA(Ser). Is also able to aminoacylate tRNA(Sec) with serine, to form the misacylated tRNA L-seryl-tRNA(Sec), which will be further converted into selenocysteinyl-tRNA(Sec). The polypeptide is Serine--tRNA ligase (Wolbachia pipientis subsp. Culex pipiens (strain wPip)).